The following is a 674-amino-acid chain: MQITEKETVQEEQQKLLYPPPSFSTKCHISSVEQYNEMYKESIESPNQFWDKKAKEFLTWFSDYTTVQHGSFEKGDISWFLNGKINVSYNCIDRHLKENADKVAILFEGDEETMVKKVTYREMFEEVCRLSNLLISLGVGKGDTVAIYLPNTPTAIYSMLACARIGAIHSVIFAGFGYESIVSRVHDAKCRVIITADEGLRGGRYIPLKEKIDQVVQHCKLVQHVLVFKNTGRPTITFNPSIDIWADEAMLDHRPYCPPVWLDSEDPLFILYTSGSTGTPKGLVHTQAGYLLYAAMTHRYVFDYHDSDVYACMADVGWITGHSYIVYGPLANGATTFIFEGTPLYPTPARYWEMVQRHKITQFYTAPTAIRSLMKFPISFTQQSDKSSLRVLGSVGEPINPEAWRWFNTNVGEGRCAIVDTYWQTESGGHLITPLPGVTSTKPGSATKPFFGIELQVLDSKTGERLYINPDINGCKEISGVLAISKPWPGIARSVYRSHGRYLQTYMTQYKGHYFTGDGVKLDSDGYYWIEGRVDDVINVSGHRLGTAELESALVGCSICAEAAVVGYPHDIKGQGILAFCTLKEGYQEDESNVIMMLKKEVRNVIGPFATPDVIVITPSLPKTRSGKIMRRILRKIGCHESSAEQLGDISTLAEPEVVKLLIEKVSKVIPKTH.

Residues 201–204 (RGGR) and T320 contribute to the CoA site. ATP contacts are provided by residues 396-398 (GEP), 420-425 (DTYWQT), D518, and R533. S541 contacts CoA. Position 544 (R544) interacts with ATP. CoA is bound at residue R603.

The protein belongs to the ATP-dependent AMP-binding enzyme family.

It catalyses the reaction acetate + ATP + CoA = acetyl-CoA + AMP + diphosphate. The sequence is that of Acetyl-coenzyme A synthetase (acsA) from Dictyostelium discoideum (Social amoeba).